A 152-amino-acid polypeptide reads, in one-letter code: UPF0178 protein SAB0630c (152 aa).

Belongs to the UPF0178 family.

The protein is UPF0178 protein SAB0630c of Staphylococcus aureus (strain bovine RF122 / ET3-1).